A 324-amino-acid polypeptide reads, in one-letter code: Archaeosine synthase subunit beta (324 aa).

The Radical SAM core domain maps to 12–254 (GKPGTALFII…LIWAKRKFPN (243 aa)). [4Fe-4S] cluster contacts are provided by Cys27, Cys36, and Cys39.

It belongs to the radical SAM superfamily. RaSEA family. In terms of assembly, forms a robust complex with the archaeosine synthase alpha subunit ArcS, likely an alpha(2)beta(2) heterotetrameric structure. [4Fe-4S] cluster is required as a cofactor.

The enzyme catalyses 7-N-[(5S)-5-amino-5-carboxypentyl]formamidino-7-deazaguanosine(15) in tRNA + S-adenosyl-L-methionine = archaeosine(15) in tRNA + L-1-piperideine-6-carboxylate + 5'-deoxyadenosine + L-methionine + 2 H(+). The protein operates within tRNA modification; archaeosine-tRNA biosynthesis. Its function is as follows. Radical SAM enzyme involved in the synthesis of archaeosine, a modified nucleoside present in the dihydrouridine loop (D-loop) of archaeal tRNAs. Catalyzes the cleavage of the C(epsilon)-N bond of the lysine moiety of q0kN15-tRNA, leading to the formation of archaeosine at position 15 in tRNAs. The polypeptide is Archaeosine synthase subunit beta (Thermococcus kodakarensis (strain ATCC BAA-918 / JCM 12380 / KOD1) (Pyrococcus kodakaraensis (strain KOD1))).